The chain runs to 237 residues: Urease accessory protein UreF (237 aa).

The protein belongs to the UreF family. As to quaternary structure, ureD, UreF and UreG form a complex that acts as a GTP-hydrolysis-dependent molecular chaperone, activating the urease apoprotein by helping to assemble the nickel containing metallocenter of UreC. The UreE protein probably delivers the nickel.

It is found in the cytoplasm. Functionally, required for maturation of urease via the functional incorporation of the urease nickel metallocenter. This is Urease accessory protein UreF from Streptococcus thermophilus (strain ATCC BAA-250 / LMG 18311).